Reading from the N-terminus, the 240-residue chain is Eukaryotic translation initiation factor 3 subunit J (240 aa).

The segment at 19-95 (KADVNKWAGE…FANMTPEQQL (77 aa)) is disordered. Positions 28 to 45 (EDEDDVKDNWEDDDEEEE) are enriched in acidic residues. Residues 46–56 (KKDAPKQEDTP) are compositionally biased toward basic and acidic residues. Residues 60–71 (AKPKKAAQQKKL) show a composition bias toward basic residues. Coiled coils occupy residues 63–90 (KKAA…ANMT) and 176–235 (SNNI…DYDD). The segment covering 72–81 (KKEDLERLQR) has biased composition (basic and acidic residues).

This sequence belongs to the eIF-3 subunit J family. As to quaternary structure, component of the eukaryotic translation initiation factor 3 (eIF-3) complex.

The protein localises to the cytoplasm. Its function is as follows. Component of the eukaryotic translation initiation factor 3 (eIF-3) complex, which is involved in protein synthesis of a specialized repertoire of mRNAs and, together with other initiation factors, stimulates binding of mRNA and methionyl-tRNAi to the 40S ribosome. The eIF-3 complex specifically targets and initiates translation of a subset of mRNAs involved in cell proliferation. The sequence is that of Eukaryotic translation initiation factor 3 subunit J from Anopheles gambiae (African malaria mosquito).